A 392-amino-acid chain; its full sequence is uncharacterized protein (392 aa).

Positions Met-1–Gly-19 are cleaved as a signal peptide. Cys-20 carries N-palmitoyl cysteine lipidation. The S-diacylglycerol cysteine moiety is linked to residue Cys-20. The tract at residues Ser-148–Glu-173 is disordered. Residues Ser-151–Gly-160 are compositionally biased toward gly residues.

The protein belongs to the TP013X lipoprotein family.

The protein resides in the cell membrane. This is an uncharacterized protein from Treponema pallidum (strain Nichols).